We begin with the raw amino-acid sequence, 255 residues long: uncharacterized protein (255 aa).

This sequence belongs to the methyltransferase superfamily.

This is an uncharacterized protein from Mycolicibacterium vanbaalenii (strain DSM 7251 / JCM 13017 / BCRC 16820 / KCTC 9966 / NRRL B-24157 / PYR-1) (Mycobacterium vanbaalenii).